We begin with the raw amino-acid sequence, 160 residues long: Major strawberry allergen Fra a 1.07 (160 aa).

The protein belongs to the BetVI family. In terms of processing, phosphorylated in vivo. Phosphorylation prevents its activity as ribonuclease. As to expression, highly expressed in roots. Expressed a low levels in ripe red fruits.

Functionally, possesses ribonuclease activity in vitro. The chain is Major strawberry allergen Fra a 1.07 from Fragaria ananassa (Strawberry).